Here is a 190-residue protein sequence, read N- to C-terminus: UPF0301 protein Pden_0436 (190 aa).

Belongs to the UPF0301 (AlgH) family.

This chain is UPF0301 protein Pden_0436, found in Paracoccus denitrificans (strain Pd 1222).